The chain runs to 455 residues: Tumor necrosis factor receptor superfamily member 1A (455 aa).

The signal sequence occupies residues 1–29 (MGLSTVPDLLLPLVLLELLVGIYPSGVIG). The Extracellular portion of the chain corresponds to 30 to 211 (LVPHLGDREK…VKGTEDSGTT (182 aa)). 4 TNFR-Cys repeats span residues 43–82 (VCPQ…TDCR), 83–125 (ECES…DTVC), 126–166 (GCRK…NTVC), and 167–196 (TCHA…KLCL). 7 disulfide bridges follow: C44–C58, C59–C72, C62–C81, C84–C99, C102–C117, C105–C125, and C127–C143. N54 is a glycosylation site (N-linked (GlcNAc...) asparagine). 2 N-linked (GlcNAc...) asparagine glycosylation sites follow: N145 and N151. 5 disulfides stabilise this stretch: C146–C158, C149–C166, C168–C179, C182–C195, and C185–C191. Residues 212–232 (VLLPLVIFFGLCLLSLLFIGL) traverse the membrane as a helical segment. At 233–455 (MYRYQRWKSK…ALPPAPSLLR (223 aa)) the chain is on the cytoplasmic side. The tract at residues 254–273 (EKEGELEGTTTKPLAPNPSF) is disordered. The segment at 338 to 348 (LQKWEDSAHKP) is N-SMase activation domain (NSD). A Death domain is found at 356-441 (PATLYAVVEN…GCLEDIEEAL (86 aa)). A (Microbial infection) N-beta-linked (GlcNAc) arginine glycan is attached at R376.

In terms of assembly, binding of TNF to the extracellular domain leads to homotrimerization. The aggregated death domains provide a novel molecular interface that interacts specifically with the death domain of TRADD. Various TRADD-interacting proteins such as TRAFS, RIPK1 and possibly FADD, are recruited to the complex by their association with TRADD. This complex activates at least two distinct signaling cascades, apoptosis and NF-kappa-B signaling. Interacts with BAG4, BABAM2, FEM1B, GRB2, SQSTM1 and TRPC4AP. Interacts directly with NOL3 (via CARD domain); inhibits TNF-signaling pathway. Interacts with SH3RF2, TRADD and RIPK1. SH3RF2 facilitates the recruitment of RIPK1 and TRADD to TNFRSF1A in a TNF-alpha-dependent process. Interacts with PGLYRP1; this interaction is important for cell death induction. Interacts (via death domain) with MADD (via death domain). As to quaternary structure, (Microbial infection) Interacts with mumps virus protein SH; this interaction inhibits downstream NF-kappa-B pathway activation. (Microbial infection) Interacts with HCV core protein. In terms of assembly, (Microbial infection) Interacts with human cytomegalovirus/HHV-5 protein UL138. As to quaternary structure, (Microbial infection) Interacts with host TNFRSF1A; this interaction leads to the stimulation of both surface expression and shedding of TNFRSF1A. In terms of processing, the soluble form is produced from the membrane form by proteolytic processing. Post-translationally, (Microbial infection) Glycosylated at Arg-376 by enteropathogenic E.coli protein NleB1 and S.typhimurium protein Ssek3: arginine GlcNAcylation prevents homotypic/heterotypic death domain interactions.

Its subcellular location is the cell membrane. It is found in the golgi apparatus membrane. It localises to the secreted. In terms of biological role, receptor for TNFSF2/TNF-alpha and homotrimeric TNFSF1/lymphotoxin-alpha. The adapter molecule FADD recruits caspase-8 to the activated receptor. The resulting death-inducing signaling complex (DISC) performs caspase-8 proteolytic activation which initiates the subsequent cascade of caspases (aspartate-specific cysteine proteases) mediating apoptosis. Contributes to the induction of non-cytocidal TNF effects including anti-viral state and activation of the acid sphingomyelinase. This chain is Tumor necrosis factor receptor superfamily member 1A (TNFRSF1A), found in Homo sapiens (Human).